The sequence spans 452 residues: Selenide, water dikinase 2 (452 aa).

At alanine 2 the chain carries N-acetylalanine. Serine 49 is subject to Phosphoserine. Selenocysteine 63 is an active-site residue. Residue selenocysteine 63 is a non-standard amino acid, selenocysteine. Lysine 66 is an ATP binding site. The segment at 86-111 is disordered; that stretch reads PPLTSGLVGGQEETVQEGGLSTRPGP. Residues 95–105 are compositionally biased toward low complexity; the sequence is GQEETVQEGGL. Residues 121–123, aspartate 141, aspartate 164, and 215–218 each bind ATP; these read GMD and GGQT. Aspartate 123 contributes to the Mg(2+) binding site. Aspartate 164 lines the Mg(2+) pocket. Aspartate 319 provides a ligand contact to Mg(2+).

This sequence belongs to the selenophosphate synthase 1 family. Class I subfamily. Homodimer. It depends on Mg(2+) as a cofactor. Post-translationally, truncated SEPHS2 proteins produced by failed UGA/Sec decoding are ubiquitinated by the CRL2(KLHDC3) complex, which recognizes the glycine (Gly) at the C-terminus of truncated SEPHS2 proteins.

It catalyses the reaction hydrogenselenide + ATP + H2O = selenophosphate + AMP + phosphate + 2 H(+). Its function is as follows. Synthesizes selenophosphate from selenide and ATP. The sequence is that of Selenide, water dikinase 2 (Sephs2) from Mus musculus (Mouse).